A 179-amino-acid chain; its full sequence is Dynein light chain Tctex-type 5 (179 aa).

It belongs to the dynein light chain Tctex-type family. In terms of assembly, interacts with ZMYND10.

This is Dynein light chain Tctex-type 5 (DYNLT5) from Homo sapiens (Human).